The sequence spans 392 residues: Imidazolonepropionase (392 aa).

Residues H69 and H71 each coordinate Fe(3+). Zn(2+) is bound by residues H69 and H71. Residues R78, Y136, and H163 each coordinate 4-imidazolone-5-propanoate. Y136 contacts N-formimidoyl-L-glutamate. Residue H226 coordinates Fe(3+). H226 serves as a coordination point for Zn(2+). A 4-imidazolone-5-propanoate-binding site is contributed by Q229. Fe(3+) is bound at residue D302. Residue D302 coordinates Zn(2+). N-formimidoyl-L-glutamate is bound by residues N304 and G306. S307 contacts 4-imidazolone-5-propanoate.

This sequence belongs to the metallo-dependent hydrolases superfamily. HutI family. Zn(2+) is required as a cofactor. The cofactor is Fe(3+).

It localises to the cytoplasm. It carries out the reaction 4-imidazolone-5-propanoate + H2O = N-formimidoyl-L-glutamate. Its pathway is amino-acid degradation; L-histidine degradation into L-glutamate; N-formimidoyl-L-glutamate from L-histidine: step 3/3. Functionally, catalyzes the hydrolytic cleavage of the carbon-nitrogen bond in imidazolone-5-propanoate to yield N-formimidoyl-L-glutamate. It is the third step in the universal histidine degradation pathway. The sequence is that of Imidazolonepropionase from Salinispora tropica (strain ATCC BAA-916 / DSM 44818 / JCM 13857 / NBRC 105044 / CNB-440).